The primary structure comprises 337 residues: Anthranilate phosphoribosyltransferase (337 aa).

5-phospho-alpha-D-ribose 1-diphosphate is bound by residues G80, 83-84 (GD), T88, 90-93 (NIST), 108-116 (KHGNRSVSS), and S120. Residue G80 participates in anthranilate binding. Position 92 (S92) interacts with Mg(2+). N111 serves as a coordination point for anthranilate. An anthranilate-binding site is contributed by R166. The Mg(2+) site is built by D225 and E226.

The protein belongs to the anthranilate phosphoribosyltransferase family. As to quaternary structure, homodimer. Requires Mg(2+) as cofactor.

It carries out the reaction N-(5-phospho-beta-D-ribosyl)anthranilate + diphosphate = 5-phospho-alpha-D-ribose 1-diphosphate + anthranilate. Its pathway is amino-acid biosynthesis; L-tryptophan biosynthesis; L-tryptophan from chorismate: step 2/5. In terms of biological role, catalyzes the transfer of the phosphoribosyl group of 5-phosphorylribose-1-pyrophosphate (PRPP) to anthranilate to yield N-(5'-phosphoribosyl)-anthranilate (PRA). This chain is Anthranilate phosphoribosyltransferase, found in Syntrophobacter fumaroxidans (strain DSM 10017 / MPOB).